Here is a 288-residue protein sequence, read N- to C-terminus: HTH-type transcriptional regulator YofA (288 aa).

The region spanning 1-58 is the HTH lysR-type domain; the sequence is MESGDLKIFQAVARKGSISKAAESLHYVQSNVTNRIQQLERQLQTQLFYRTNRGMTLT. The H-T-H motif DNA-binding region spans 18–37; sequence ISKAAESLHYVQSNVTNRIQ.

It belongs to the LysR transcriptional regulatory family.

Its subcellular location is the cytoplasm. Functionally, regulates expression of the cell division protein ftsW, and is essential for cell viability during stationary phase. This is HTH-type transcriptional regulator YofA (yofA) from Bacillus velezensis (strain DSM 23117 / BGSC 10A6 / LMG 26770 / FZB42) (Bacillus amyloliquefaciens subsp. plantarum).